Consider the following 171-residue polypeptide: UPF0312 protein SAB2563 (171 aa).

Belongs to the UPF0312 family.

This chain is UPF0312 protein SAB2563, found in Staphylococcus aureus (strain bovine RF122 / ET3-1).